The following is a 719-amino-acid chain: Cyclin-dependent kinase 11.1 (719 aa).

Composition is skewed to basic and acidic residues over residues 1-20 (MSDHLGSSHDEGELSDESHK), 38-48 (KGLESKMRESI), and 78-129 (KAKE…DQKV). Disordered stretches follow at residues 1 to 215 (MSDH…KDDD) and 231 to 315 (EEKE…EMTE). Residues 130–140 (HEHRHHHHHRK) show a composition bias toward basic residues. Residues 141–163 (HETDGHRTNRSNRDRSSERDSEK) show a composition bias toward basic and acidic residues. Residues 164–174 (HKRHIDRHKKS) show a composition bias toward basic residues. 2 stretches are compositionally biased toward basic and acidic residues: residues 191–215 (HTDVPADAKLFDRILDPNYKKKDDD) and 264–274 (DDTKPKSPGKA). Positions 275–285 (EDDDDVIEVLD) are enriched in acidic residues. In terms of domain architecture, Protein kinase spans 356-647 (YECVNRVDEG…ATQALDHEWF (292 aa)). ATP is bound by residues 362–370 (VDEGTFGVV) and Lys-385. Catalysis depends on Asp-484, which acts as the Proton acceptor. Residues 657 to 689 (EEFPTFPAKSEQNKAPPPAKQKQQENRISHVDP) are disordered. Basic and acidic residues predominate over residues 678 to 689 (KQQENRISHVDP).

It belongs to the protein kinase superfamily. CMGC Ser/Thr protein kinase family. CDC2/CDKX subfamily. In terms of tissue distribution, broadly expressed in somatic and germ line cells (at protein level). Not expressed in sperm (at protein level).

It is found in the nucleus. It carries out the reaction L-seryl-[protein] + ATP = O-phospho-L-seryl-[protein] + ADP + H(+). It catalyses the reaction L-threonyl-[protein] + ATP = O-phospho-L-threonyl-[protein] + ADP + H(+). Probable cyclin-dependent kinase whose activity is most likely regulated by the cyclin cyl-1/Cylin-L. Important for normal oocyte and sperm development; probably required during multiple stages of gametogenesis. Plays a role in the activation of RAS-ERK signaling in the germ line. Also acts partially redundantly with cdk-11.2 to ensure embryonic viability. The sequence is that of Cyclin-dependent kinase 11.1 from Caenorhabditis elegans.